Here is a 379-residue protein sequence, read N- to C-terminus: Succinyl-diaminopimelate desuccinylase (379 aa).

His-68 lines the Zn(2+) pocket. Residue Asp-70 is part of the active site. Residue Asp-101 participates in Zn(2+) binding. Glu-134 functions as the Proton acceptor in the catalytic mechanism. Residues Glu-135, Glu-163, and His-352 each coordinate Zn(2+).

It belongs to the peptidase M20A family. DapE subfamily. As to quaternary structure, homodimer. It depends on Zn(2+) as a cofactor. Co(2+) is required as a cofactor.

It catalyses the reaction N-succinyl-(2S,6S)-2,6-diaminopimelate + H2O = (2S,6S)-2,6-diaminopimelate + succinate. It participates in amino-acid biosynthesis; L-lysine biosynthesis via DAP pathway; LL-2,6-diaminopimelate from (S)-tetrahydrodipicolinate (succinylase route): step 3/3. Functionally, catalyzes the hydrolysis of N-succinyl-L,L-diaminopimelic acid (SDAP), forming succinate and LL-2,6-diaminopimelate (DAP), an intermediate involved in the bacterial biosynthesis of lysine and meso-diaminopimelic acid, an essential component of bacterial cell walls. The chain is Succinyl-diaminopimelate desuccinylase from Dinoroseobacter shibae (strain DSM 16493 / NCIMB 14021 / DFL 12).